Consider the following 604-residue polypeptide: Sulfite reductase [NADPH] flavoprotein alpha-component (604 aa).

In terms of domain architecture, Flavodoxin-like spans 65–203; that stretch reads VTILYGSQTG…AAGQWHADVL (139 aa). FMN is bound by residues 71–76, 118–121, and 154–163; these read SQTGNG, STHG, and LGDSSYEFFC. The FAD-binding FR-type domain maps to 236 to 453; it reads QNPYSAEVLV…VEPNKHFRLP (218 aa). Residues Thr324, Leu358, 392 to 395, 410 to 412, and 425 to 428 contribute to the FAD site; these read RLYS, TVA, and GGAS. NADP(+) is bound by residues 524–525, 530–534, and Asp566; these read SR and KIYVQ. Tyr604 serves as a coordination point for FAD.

Belongs to the NADPH-dependent sulphite reductase flavoprotein subunit CysJ family. The protein in the N-terminal section; belongs to the flavodoxin family. It in the C-terminal section; belongs to the flavoprotein pyridine nucleotide cytochrome reductase family. As to quaternary structure, alpha(8)-beta(8). The alpha component is a flavoprotein, the beta component is a hemoprotein. The cofactor is FAD. It depends on FMN as a cofactor.

It carries out the reaction hydrogen sulfide + 3 NADP(+) + 3 H2O = sulfite + 3 NADPH + 4 H(+). It functions in the pathway sulfur metabolism; hydrogen sulfide biosynthesis; hydrogen sulfide from sulfite (NADPH route): step 1/1. Component of the sulfite reductase complex that catalyzes the 6-electron reduction of sulfite to sulfide. This is one of several activities required for the biosynthesis of L-cysteine from sulfate. The flavoprotein component catalyzes the electron flow from NADPH -&gt; FAD -&gt; FMN to the hemoprotein component. The polypeptide is Sulfite reductase [NADPH] flavoprotein alpha-component (Shewanella sp. (strain MR-7)).